Reading from the N-terminus, the 396-residue chain is S-adenosylmethionine synthase (396 aa).

An ATP-binding site is contributed by His16. Asp18 is a binding site for Mg(2+). Glu44 is a K(+) binding site. Residues Glu57 and Gln100 each coordinate L-methionine. The segment at 100–110 (QSVDIAQGVDR) is flexible loop. ATP-binding positions include 165 to 167 (DAK), Asp240, 246 to 247 (RK), Ala263, and Lys267. An L-methionine-binding site is contributed by Asp240. Lys271 serves as a coordination point for L-methionine.

This sequence belongs to the AdoMet synthase family. In terms of assembly, homotetramer; dimer of dimers. Mg(2+) serves as cofactor. It depends on K(+) as a cofactor.

The protein localises to the cytoplasm. It carries out the reaction L-methionine + ATP + H2O = S-adenosyl-L-methionine + phosphate + diphosphate. Its pathway is amino-acid biosynthesis; S-adenosyl-L-methionine biosynthesis; S-adenosyl-L-methionine from L-methionine: step 1/1. Catalyzes the formation of S-adenosylmethionine (AdoMet) from methionine and ATP. The overall synthetic reaction is composed of two sequential steps, AdoMet formation and the subsequent tripolyphosphate hydrolysis which occurs prior to release of AdoMet from the enzyme. The protein is S-adenosylmethionine synthase of Pseudomonas entomophila (strain L48).